The sequence spans 146 residues: uncharacterized protein (146 aa).

Residues 7 to 24 (VIALFLVTGLTLYAIRLL) traverse the membrane as a helical segment.

It is found in the membrane. This is an uncharacterized protein from Haemophilus influenzae (strain ATCC 51907 / DSM 11121 / KW20 / Rd).